The chain runs to 248 residues: MSGHSKWATIKHKKGALDAKRGKIFTRLIKEITMAAKQGGDAEKNPRLRSAVAAAKAENMPADNIKRAIQRGTGEIEGVNYEEITFEGYGPGGVAILVEVTTDNRNRTVSEIRHAFGKNGGNMGEAGSVAWMFAKKGSIVIAKAAAKEDDLMNLVLENGADDLKDDGDNWEILCDPNAYEGVLEAVKKAGITPEVAEIGMIPQNYIKLEGNQVNTMVRLLEALEDGDDVQHVYSNVDFDQAQLEQVAG.

It belongs to the TACO1 family.

The protein localises to the cytoplasm. The sequence is that of Probable transcriptional regulatory protein Acid345_2125 from Koribacter versatilis (strain Ellin345).